The chain runs to 389 residues: Arrestin-C (389 aa).

Positions 369–389 (AQQEPSGESQEALAAEGNEGS) are disordered.

This sequence belongs to the arrestin family. In terms of assembly, homodimer; disulfide-linked in response to retinal illumination. Interacts with CXCR4; the interaction is dependent on the C-terminal phosphorylation of CXCR4 and modulates the calcium ion mobilization activity of CXCR4. Interacts with GPR84. In terms of tissue distribution, expressed in cone photoreceptors in the retina (at protein level).

It localises to the photoreceptor inner segment. The protein localises to the cell projection. The protein resides in the cilium. Its subcellular location is the photoreceptor outer segment. Its function is as follows. May play a role in an as yet undefined retina-specific signal transduction. Could bind to photoactivated-phosphorylated red/green opsins. The sequence is that of Arrestin-C (ARR3) from Bos taurus (Bovine).